Reading from the N-terminus, the 170-residue chain is Acireductone dioxygenase (170 aa).

Residues His-99, His-101, Glu-105, and His-144 each contribute to the Fe(2+) site. Residues His-99, His-101, Glu-105, and His-144 each coordinate Ni(2+).

It belongs to the acireductone dioxygenase (ARD) family. Monomer. The cofactor is Fe(2+). Requires Ni(2+) as cofactor.

It carries out the reaction 1,2-dihydroxy-5-(methylsulfanyl)pent-1-en-3-one + O2 = 3-(methylsulfanyl)propanoate + CO + formate + 2 H(+). The catalysed reaction is 1,2-dihydroxy-5-(methylsulfanyl)pent-1-en-3-one + O2 = 4-methylsulfanyl-2-oxobutanoate + formate + 2 H(+). It participates in amino-acid biosynthesis; L-methionine biosynthesis via salvage pathway; L-methionine from S-methyl-5-thio-alpha-D-ribose 1-phosphate: step 5/6. Its function is as follows. Catalyzes 2 different reactions between oxygen and the acireductone 1,2-dihydroxy-3-keto-5-methylthiopentene (DHK-MTPene) depending upon the metal bound in the active site. Fe-containing acireductone dioxygenase (Fe-ARD) produces formate and 2-keto-4-methylthiobutyrate (KMTB), the alpha-ketoacid precursor of methionine in the methionine recycle pathway. Ni-containing acireductone dioxygenase (Ni-ARD) produces methylthiopropionate, carbon monoxide and formate, and does not lie on the methionine recycle pathway. The chain is Acireductone dioxygenase from Bacillus anthracis.